The chain runs to 848 residues: Adenylate cyclase (848 aa).

The interval 1-535 is catalytic; it reads MYLYIETLKQ…DVSHHFPLRL (535 aa). A regulatory region spans residues 541–848; it reads KALYSPCEIR…DAPLLQQYFS (308 aa). Histidine 609 is modified (phosphohistidine; by CRR).

Belongs to the adenylyl cyclase class-1 family.

It is found in the cytoplasm. The catalysed reaction is ATP = 3',5'-cyclic AMP + diphosphate. In Escherichia coli O6:H1 (strain CFT073 / ATCC 700928 / UPEC), this protein is Adenylate cyclase (cyaA).